The sequence spans 198 residues: Recombination protein RecR (198 aa).

Residues 56 to 71 form a C4-type zinc finger; the sequence is CTECRDFSETKICAIC. The Toprim domain occupies 79–174; that stretch reads HQLCVVESPP…RPSRLAQGLP (96 aa).

It belongs to the RecR family.

In terms of biological role, may play a role in DNA repair. It seems to be involved in an RecBC-independent recombinational process of DNA repair. It may act with RecF and RecO. In Xylella fastidiosa (strain 9a5c), this protein is Recombination protein RecR.